The following is a 640-amino-acid chain: 1-deoxy-D-xylulose-5-phosphate synthase (640 aa).

Thiamine diphosphate-binding positions include His-75 and Gly-117–Ala-119. Residue Asp-146 participates in Mg(2+) binding. Residues Ala-147–Ala-148, Asn-175, and Glu-370 contribute to the thiamine diphosphate site. Asn-175 contributes to the Mg(2+) binding site.

This sequence belongs to the transketolase family. DXPS subfamily. Homodimer. The cofactor is Mg(2+). It depends on thiamine diphosphate as a cofactor.

The catalysed reaction is D-glyceraldehyde 3-phosphate + pyruvate + H(+) = 1-deoxy-D-xylulose 5-phosphate + CO2. It participates in metabolic intermediate biosynthesis; 1-deoxy-D-xylulose 5-phosphate biosynthesis; 1-deoxy-D-xylulose 5-phosphate from D-glyceraldehyde 3-phosphate and pyruvate: step 1/1. Its function is as follows. Catalyzes the acyloin condensation reaction between C atoms 2 and 3 of pyruvate and glyceraldehyde 3-phosphate to yield 1-deoxy-D-xylulose-5-phosphate (DXP). This chain is 1-deoxy-D-xylulose-5-phosphate synthase, found in Chlamydia trachomatis serovar D (strain ATCC VR-885 / DSM 19411 / UW-3/Cx).